A 249-amino-acid polypeptide reads, in one-letter code: Mediator of RNA polymerase II transcription subunit 8 (249 aa).

The stretch at 1–26 (MQREEKQLDMLLEAVLNRLNDLKHSI) forms a coiled coil. 2 stretches are compositionally biased toward polar residues: residues 215 to 224 (SPMSAVSPSG) and 235 to 249 (IKTNIKSANQVHPYR). A disordered region spans residues 215–249 (SPMSAVSPSGNAPMGKMPSGIKTNIKSANQVHPYR).

It belongs to the Mediator complex subunit 8 family. Component of the Mediator complex.

Its subcellular location is the nucleus. In terms of biological role, component of the Mediator complex, a coactivator involved in the regulated transcription of nearly all RNA polymerase II-dependent genes. Mediator functions as a bridge to convey information from gene-specific regulatory proteins to the basal RNA polymerase II transcription machinery. Mediator is recruited to promoters by direct interactions with regulatory proteins and serves as a scaffold for the assembly of a functional preinitiation complex with RNA polymerase II and the general transcription factors. This Anopheles gambiae (African malaria mosquito) protein is Mediator of RNA polymerase II transcription subunit 8 (MED8).